Here is a 213-residue protein sequence, read N- to C-terminus: Urease accessory protein UreG (213 aa).

A GTP-binding site is contributed by 12 to 19; that stretch reads GPVGSGKT.

The protein belongs to the SIMIBI class G3E GTPase family. UreG subfamily. In terms of assembly, homodimer. UreD, UreF and UreG form a complex that acts as a GTP-hydrolysis-dependent molecular chaperone, activating the urease apoprotein by helping to assemble the nickel containing metallocenter of UreC. The UreE protein probably delivers the nickel.

It localises to the cytoplasm. Functionally, facilitates the functional incorporation of the urease nickel metallocenter. This process requires GTP hydrolysis, probably effectuated by UreG. The chain is Urease accessory protein UreG from Marinomonas sp. (strain MWYL1).